A 162-amino-acid polypeptide reads, in one-letter code: Ribosomal RNA large subunit methyltransferase H (162 aa).

S-adenosyl-L-methionine contacts are provided by residues Leu78, Gly109, and 128 to 133 (LSALTL).

The protein belongs to the RNA methyltransferase RlmH family. As to quaternary structure, homodimer.

It is found in the cytoplasm. It catalyses the reaction pseudouridine(1915) in 23S rRNA + S-adenosyl-L-methionine = N(3)-methylpseudouridine(1915) in 23S rRNA + S-adenosyl-L-homocysteine + H(+). Specifically methylates the pseudouridine at position 1915 (m3Psi1915) in 23S rRNA. This is Ribosomal RNA large subunit methyltransferase H from Psychrobacter arcticus (strain DSM 17307 / VKM B-2377 / 273-4).